The primary structure comprises 321 residues: MSLVCSLSCVAPLPQTKQSRPSFLKLETCTLSLSSPAGYPNFTTGIRKHISYLFTEPIKLPRLAKSRILVSQESFTETSTIDMDWEDQEEIEDTGSPWEGSVMYRRNASVTHVEYCTTLERLGLGRLSTDVSKKRASAMGLRVTKDVKDYPDGTPVQVSVDVIRKKKKLRLDGIVRTVITLGCNRCGESTGESIFSNFSLLLTEEPVEEPDVIDLGFTFGNDKEEGEDDDDNDDSWIDWEDKLHFPPEVKEIDISKHIRDLVHLEITITAICDSACKGMCLKCGANLNKRKCDCGREEKDKGYGPLGNLREQMQQKEGLRN.

Residues 1-32 constitute a chloroplast transit peptide; that stretch reads MSLVCSLSCVAPLPQTKQSRPSFLKLETCTLS.

Belongs to the DUF177 domain family.

It is found in the plastid. The protein localises to the chloroplast stroma. It localises to the chloroplast nucleoid. In terms of biological role, plays a role in synthesis, processing and/or stability of 23S rRNA. Required for embryogenesis. The polypeptide is Large ribosomal RNA subunit accumulation protein YCED homolog 1, chloroplastic (Arabidopsis thaliana (Mouse-ear cress)).